Here is a 356-residue protein sequence, read N- to C-terminus: NADH-quinone oxidoreductase subunit H (356 aa).

8 helical membrane-spanning segments follow: residues 4–24, 79–99, 127–147, 166–186, 198–218, 251–271, 289–309, and 329–349; these read ALIL…LTGV, LLAP…IPFG, GVLY…IAGW, ISYE…TGSL, MWNI…TAMF, FFLA…LLFF, FIGL…FIWV, and MIPW…YWKE.

It belongs to the complex I subunit 1 family. NDH-1 is composed of 14 different subunits. Subunits NuoA, H, J, K, L, M, N constitute the membrane sector of the complex.

The protein localises to the cell inner membrane. The enzyme catalyses a quinone + NADH + 5 H(+)(in) = a quinol + NAD(+) + 4 H(+)(out). NDH-1 shuttles electrons from NADH, via FMN and iron-sulfur (Fe-S) centers, to quinones in the respiratory chain. The immediate electron acceptor for the enzyme in this species is believed to be ubiquinone. Couples the redox reaction to proton translocation (for every two electrons transferred, four hydrogen ions are translocated across the cytoplasmic membrane), and thus conserves the redox energy in a proton gradient. This subunit may bind ubiquinone. In Leptospira biflexa serovar Patoc (strain Patoc 1 / ATCC 23582 / Paris), this protein is NADH-quinone oxidoreductase subunit H.